Consider the following 500-residue polypeptide: Ribose import ATP-binding protein RbsA (500 aa).

ABC transporter domains follow at residues 3–239 (IEMK…VGRE) and 246–493 (DRTP…TGGV). ATP is bound at residue 35-42 (GENGAGKS).

This sequence belongs to the ABC transporter superfamily. Ribose importer (TC 3.A.1.2.1) family. The complex is composed of an ATP-binding protein (RbsA), two transmembrane proteins (RbsC) and a solute-binding protein (RbsB).

It localises to the cell membrane. It carries out the reaction D-ribose(out) + ATP + H2O = D-ribose(in) + ADP + phosphate + H(+). Its function is as follows. Part of the ABC transporter complex RbsABC involved in ribose import. Responsible for energy coupling to the transport system. This Lacticaseibacillus paracasei (strain ATCC 334 / BCRC 17002 / CCUG 31169 / CIP 107868 / KCTC 3260 / NRRL B-441) (Lactobacillus paracasei) protein is Ribose import ATP-binding protein RbsA.